The primary structure comprises 251 residues: Triosephosphate isomerase (251 aa).

Residue 9-11 (NWK) participates in substrate binding. The active-site Electrophile is the His-95. Glu-167 acts as the Proton acceptor in catalysis. Residues Gly-173, Ser-212, and 233-234 (GG) contribute to the substrate site.

Belongs to the triosephosphate isomerase family. In terms of assembly, homodimer.

Its subcellular location is the cytoplasm. The enzyme catalyses D-glyceraldehyde 3-phosphate = dihydroxyacetone phosphate. It functions in the pathway carbohydrate biosynthesis; gluconeogenesis. It participates in carbohydrate degradation; glycolysis; D-glyceraldehyde 3-phosphate from glycerone phosphate: step 1/1. Functionally, involved in the gluconeogenesis. Catalyzes stereospecifically the conversion of dihydroxyacetone phosphate (DHAP) to D-glyceraldehyde-3-phosphate (G3P). The chain is Triosephosphate isomerase from Vibrio sp. (strain ANT-300).